An 85-amino-acid polypeptide reads, in one-letter code: Large ribosomal subunit protein bL27 (85 aa).

The tract at residues 1 to 22 (MAHKKAGGSTRNGRDSESKRLG) is disordered.

The protein belongs to the bacterial ribosomal protein bL27 family.

The sequence is that of Large ribosomal subunit protein bL27 from Aliivibrio salmonicida (strain LFI1238) (Vibrio salmonicida (strain LFI1238)).